The chain runs to 1177 residues: DNA-directed RNA polymerase subunit beta' (1177 aa).

Zn(2+) contacts are provided by Cys-60, Cys-62, Cys-75, and Cys-78. Asp-450, Asp-452, and Asp-454 together coordinate Mg(2+). Zn(2+)-binding residues include Cys-795, Cys-869, Cys-876, and Cys-879.

The protein belongs to the RNA polymerase beta' chain family. In terms of assembly, the RNAP catalytic core consists of 2 alpha, 1 beta, 1 beta' and 1 omega subunit. When a sigma factor is associated with the core the holoenzyme is formed, which can initiate transcription. The cofactor is Mg(2+). Zn(2+) is required as a cofactor.

It carries out the reaction RNA(n) + a ribonucleoside 5'-triphosphate = RNA(n+1) + diphosphate. In terms of biological role, DNA-dependent RNA polymerase catalyzes the transcription of DNA into RNA using the four ribonucleoside triphosphates as substrates. The sequence is that of DNA-directed RNA polymerase subunit beta' from Clostridium botulinum (strain Eklund 17B / Type B).